Consider the following 891-residue polypeptide: DNA mismatch repair protein MutS (891 aa).

Position 639 to 646 (639 to 646) interacts with ATP; that stretch reads GPNMAGKS. Residues 827–854 are disordered; the sequence is TIQEARPSAQGSEEKTPSSPAEKGLSLF.

This sequence belongs to the DNA mismatch repair MutS family.

Functionally, this protein is involved in the repair of mismatches in DNA. It is possible that it carries out the mismatch recognition step. This protein has a weak ATPase activity. The protein is DNA mismatch repair protein MutS of Treponema denticola (strain ATCC 35405 / DSM 14222 / CIP 103919 / JCM 8153 / KCTC 15104).